The primary structure comprises 784 residues: MPRALWTAWVWAVIILSTEGASDQASSLSCDPTGVCDGHSRSLNSIPSGLTAGVKSLDLSNNEITYVSNRDLQRCVNLKTLRLGANEIHTVEEDSFFHLRNLEYLDLSYNRLSNLSSSWFRSLYVLKFLNLLGNLYKTLGETSLFSHLPNLRTLKVGNSNSFTEIHEKDFTGLTFLEELEISAQNLQIYVPKSLKSIQNISHLILHLKQPVLLVDILVDIVSSLDCLELRDTNLHTFHFSEASISEMSTSVKKLIFRNVQFTDESFVEVVKLFNYVSGILEVEFDDCTHDGIGDFRALSLDRIRHLGNVETLTIRKLHIPQFFLFQDLSSIYPLTGKVKRVTIENSKVFLVPCLLSQHLKSLEYLDLSENLMSEETLKNSACKDAWPFLQTLVLRQNRLKSLEKXGELLLTLENLNSLDISKNNFLSMPETCQWPGKMKQLNLSSTRIHSLTQCLPQTLEILDVSNNNLDSFSLILPQLKELYISRNKLKTLPDASFLPVLXVMRISRNIINTFSKEQLDSFQQLKTLEAGGNNFICSCDFLSFTQGQQALGRVLVDWPDDYHCDSPSHVRGQRVQDARLSLSECHRAAVVSAACCALFLLLLLMGVLCHRFHGLWYMKMMWAWLQAKRKPRKAPRRDICYDAFVSYSERDSYWVENLMVQELEQFNPPFKLCLHKRDFIPGKWIIDNIIDSIEKSHKTIFVLSENFVKSEWCKYELDFSHFRLFDENNDAAILILLEPIDKKAIPQRFCKLRKIMNTKTYLEWPVDETQQEGFWLNLRAAIRS.

The first 20 residues, M1 to G20, serve as a signal peptide directing secretion. Topologically, residues A21–R587 are extracellular. A disulfide bond links C30 and C36. LRR repeat units lie at residues V54–N77, L78–N101, L102–V125, L126–N150, L151–F175, L176–N199, I200–S223, L224–S250, V251–G278, I279–N308, V309–K337, V338–S361, L362–F388, L389–N414, L415–K437, M438–Q457, T458–Q478, L479–V500, and L501–Q524. N114 carries an N-linked (GlcNAc...) asparagine glycan. Residue N199 is glycosylated (N-linked (GlcNAc...) asparagine). C353 and C382 are oxidised to a cystine. A disulfide bridge connects residues C432 and C454. A glycan (N-linked (GlcNAc...) asparagine) is linked at N442. One can recognise an LRRCT domain in the interval L525–R579. The chain crosses the membrane as a helical span at residues A588–L608. The Cytoplasmic portion of the chain corresponds to C609–S784. Residues I639 to I782 form the TIR domain. K754 participates in a covalent cross-link: Glycyl lysine isopeptide (Lys-Gly) (interchain with G-Cter in ubiquitin). The short motif at Y761 to L778 is the ATG16L1-binding motif element.

The protein belongs to the Toll-like receptor family. Interacts with LY96, TLR1 and TLR6 (via extracellular domain). TLR2 seems to exist in heterodimers with either TLR1 or TLR6 before stimulation by the ligand. The heterodimers form bigger oligomers in response to their corresponding ligands as well as further heterotypic associations with other receptors such as CD14 and/or CD36. Binds MYD88 (via TIR domain). Interacts with TICAM1. Interacts with CNPY3. Interacts with ATG16L1. Interacts with PPP1R11. Interacts with TICAM2. Interacts with TIRAP. Ubiquitinated at Lys-754 by PPP1R11, leading to its degradation. Deubiquitinated by USP2. Post-translationally, glycosylation of Asn-442 is critical for secretion of the N-terminal ectodomain of TLR2.

It is found in the membrane. The protein localises to the cytoplasmic vesicle. The protein resides in the phagosome membrane. It localises to the membrane raft. Cooperates with LY96 to mediate the innate immune response to bacterial lipoproteins and other microbial cell wall components. Cooperates with TLR1 or TLR6 to mediate the innate immune response to bacterial lipoproteins or lipopeptides. Acts via MYD88 and TRAF6, leading to NF-kappa-B activation, cytokine secretion and the inflammatory response. May also promote apoptosis in response to lipoproteins. Forms activation clusters composed of several receptors depending on the ligand, these clusters trigger signaling from the cell surface and subsequently are targeted to the Golgi in a lipid-raft dependent pathway. Forms the cluster TLR2:TLR6:CD14:CD36 in response to diacylated lipopeptides and TLR2:TLR1:CD14 in response to triacylated lipopeptides. The chain is Toll-like receptor 2 (TLR2) from Bos indicus (Zebu).